Consider the following 395-residue polypeptide: MDFNMKKLASDAGIFFTRAVQFTEEKFGQAEKTELDAHFENLLARADSTKNWTEKILRQTEVLLQPNPSARVEEFLYEKLDRKVPSRVTNGELLAQYMADAASELGPTTPYGKTLIKVAEAEKQLGAAERDFIHTASISFLTPLRNFLEGDWKTISKERRLLQNRRLDLDACKARLKKAKAAEAKATTVPDFQETRPRNYILSASASALWNDEVDKAEQELRVAQTEFDRQAEVTRLLLEGISSTHVNHLRCLHEFVKSQTTYYAQCYRHMLDLQKQLGRFPGTFVGTTEPASPPLSSTSPTTAAATMPVVPSVASLAPPGEASLCLEEVAPPASGTRKARVLYDYEAADSSELALLADELITVYSLPGMDPDWLIGERGNKKGKVPVTYLELLS.

Met-1 bears the N-acetylmethionine mark. A membrane-binding amphipathic helix region spans residues Met-1–Phe-27. Ser-10 bears the Phosphoserine mark. Residues Glu-24–Gly-287 form the BAR domain. 2 coiled-coil regions span residues Ile-116 to Phe-132 and Ala-206 to Glu-240. One can recognise an SH3 domain in the interval Ser-335–Ser-395. Position 395 is a phosphoserine (Ser-395).

The protein belongs to the endophilin family. Homodimer, and heterodimer with SH3GLB1. In terms of tissue distribution, detected in skeletal muscle, adipocyte, brain, lung, colon and mammary gland.

The protein localises to the cytoplasm. This Homo sapiens (Human) protein is Endophilin-B2 (SH3GLB2).